The following is a 287-amino-acid chain: MKVIKTLSIINFFIFVTFNIKNESKYSNTFINNAYNMSIRRSMTESNPPTGASGSAGGSAGGSAGGSAGGSAGGSAGGSAGGSAGGSAGGSAGGSAGGSAGGSAGSGDGNGANPGADAERSPSTPATTTTTTTTNDAEASTSTSSENPNHNNAETNQANKETQNNSNVQQDSQTKSNVPPTQDADTKSPTAQPEQAENSAPTAEQTESPELQSAPENKGTGQHGHMHGSRNNHPQNTSDSQKECTDGNKENCGAATSLLNNSSNIASINKFVVLISATLVLSFAIFI.

The signal sequence occupies residues 1–20; that stretch reads MKVIKTLSIINFFIFVTFNI. Residues asparagine 22 and asparagine 36 are each glycosylated (N-linked (GlcNAc...) asparagine). A disordered region spans residues 42–248; sequence SMTESNPPTG…DSQKECTDGN (207 aa). The interval 44 to 213 is polymorphic region; sequence TESNPPTGAS…EQTESPELQS (170 aa). The span at 54-112 shows a compositional bias: gly residues; that stretch reads GSAGGSAGGSAGGSAGGSAGGSAGGSAGGSAGGSAGGSAGGSAGGSAGGSAGSGDGNGA. 12 consecutive repeat copies span residues 55-58, 59-62, 63-66, 67-70, 71-74, 75-78, 79-82, 83-86, 87-90, 91-94, 95-98, and 99-102. Positions 55–102 are 12 X 4 AA tandem repeats of S-A-G-G; that stretch reads SAGGSAGGSAGGSAGGSAGGSAGGSAGGSAGGSAGGSAGGSAGGSAGG. Residues 121–149 show a composition bias toward low complexity; it reads SPSTPATTTTTTTTNDAEASTSTSSENPN. Composition is skewed to polar residues over residues 150-180 and 187-215; these read HNNA…NVPP and KSPT…QSAP. A glycan (N-linked (GlcNAc...) asparagine) is linked at asparagine 164. An N-linked (GlcNAc...) asparagine glycan is attached at asparagine 236. A disulfide bridge connects residues cysteine 244 and cysteine 252. N-linked (GlcNAc...) asparagine glycans are attached at residues asparagine 260 and asparagine 261. Residue asparagine 261 is the site of GPI-anchor amidated asparagine attachment. The propeptide at 262–287 is removed in mature form; that stretch reads SSNIASINKFVVLISATLVLSFAIFI.

The protein localises to the cell membrane. In terms of biological role, may play a role in the merozoite attachment to the erythrocyte. The polypeptide is Merozoite surface protein 2 (Plasmodium falciparum (isolate FCR-3 / Gambia)).